The primary structure comprises 303 residues: UDP-3-O-acyl-N-acetylglucosamine deacetylase (303 aa).

3 residues coordinate Zn(2+): H78, H237, and D241. Catalysis depends on H264, which acts as the Proton donor.

It belongs to the LpxC family. Requires Zn(2+) as cofactor.

The enzyme catalyses a UDP-3-O-[(3R)-3-hydroxyacyl]-N-acetyl-alpha-D-glucosamine + H2O = a UDP-3-O-[(3R)-3-hydroxyacyl]-alpha-D-glucosamine + acetate. Its pathway is glycolipid biosynthesis; lipid IV(A) biosynthesis; lipid IV(A) from (3R)-3-hydroxytetradecanoyl-[acyl-carrier-protein] and UDP-N-acetyl-alpha-D-glucosamine: step 2/6. In terms of biological role, catalyzes the hydrolysis of UDP-3-O-myristoyl-N-acetylglucosamine to form UDP-3-O-myristoylglucosamine and acetate, the committed step in lipid A biosynthesis. The sequence is that of UDP-3-O-acyl-N-acetylglucosamine deacetylase from Xanthomonas euvesicatoria pv. vesicatoria (strain 85-10) (Xanthomonas campestris pv. vesicatoria).